The following is a 565-amino-acid chain: Adenine deaminase (565 aa).

This sequence belongs to the metallo-dependent hydrolases superfamily. Adenine deaminase family. It depends on Mn(2+) as a cofactor.

It carries out the reaction adenine + H2O + H(+) = hypoxanthine + NH4(+). This is Adenine deaminase from Lactobacillus delbrueckii subsp. bulgaricus (strain ATCC 11842 / DSM 20081 / BCRC 10696 / JCM 1002 / NBRC 13953 / NCIMB 11778 / NCTC 12712 / WDCM 00102 / Lb 14).